A 498-amino-acid polypeptide reads, in one-letter code: Probable malate:quinone oxidoreductase (498 aa).

This sequence belongs to the MQO family. Requires FAD as cofactor.

The enzyme catalyses (S)-malate + a quinone = a quinol + oxaloacetate. Its pathway is carbohydrate metabolism; tricarboxylic acid cycle; oxaloacetate from (S)-malate (quinone route): step 1/1. This chain is Probable malate:quinone oxidoreductase, found in Granulibacter bethesdensis (strain ATCC BAA-1260 / CGDNIH1).